Consider the following 2194-residue polypeptide: Genome polyprotein (2194 aa).

Glycine 2 carries the N-myristoyl glycine; by host lipid modification. The Cytoplasmic segment spans residues 2-1504 (GAQVSTQKTG…HVSRAFICLQ (1503 aa)). Residues 566-582 (LYQNDPEGALNKAVGRV) form an amphipathic alpha-helix region. Active-site for protease 2A activity residues include histidine 881 and aspartate 899. Cysteine 916 and cysteine 918 together coordinate Zn(2+). Catalysis depends on cysteine 970, which acts as the For protease 2A activity. Cysteine 976 and histidine 978 together coordinate Zn(2+). Positions 1110–1182 (NNNWLKKFTE…EQSAPSQSDQ (73 aa)) are membrane-binding. An oligomerization region spans residues 1110 to 1248 (NNNWLKKFTE…SPGAGKSVAT (139 aa)). Residues 1131-1135 (AIKIQ) are RNA-binding. One can recognise an SF3 helicase domain in the interval 1214–1370 (EKKMSNYIQF…SMYSQNGKIN (157 aa)). Zn(2+)-binding residues include cysteine 1378, cysteine 1390, and cysteine 1395. The segment at 1378–1395 (CDEECCPVNFKRCCPLVC) adopts a C4-type; degenerate zinc-finger fold. Residues 1422–1429 (EYNHRHSV) form an RNA-binding region. The segment at 1433–1438 (LEALFQ) is oligomerization. Residues 1505–1520 (ALTTFVSVAGIIYIIY) lie within the membrane without spanning it. The Cytoplasmic portion of the chain corresponds to 1521-2194 (KLFAGFQGAY…TLRRKWLDSF (674 aa)). Tyrosine 1530 bears the O-(5'-phospho-RNA)-tyrosine mark. Positions 1550–1728 (GPAFEFAVAM…FSAALLRHYF (179 aa)) constitute a Peptidase C3 domain. Active-site for protease 3C activity residues include histidine 1589, glutamate 1620, and cysteine 1696. Residues 1959-2075 (GHLIAFDYSG…SYPHPIDASL (117 aa)) form the RdRp catalytic domain. Residues aspartate 1965 and aspartate 2061 each contribute to the Mg(2+) site.

The protein belongs to the picornaviruses polyprotein family. In terms of assembly, interacts with capsid protein VP1 and capsid protein VP3 to form heterotrimeric protomers. As to quaternary structure, interacts with capsid protein VP0, and capsid protein VP3 to form heterotrimeric protomers. Five protomers subsequently associate to form pentamers which serve as building blocks for the capsid. Interacts with capsid protein VP2, capsid protein VP3 and capsid protein VP4 following cleavage of capsid protein VP0. Interacts with capsid protein VP1 and capsid protein VP3 in the mature capsid. In terms of assembly, interacts with capsid protein VP0 and capsid protein VP1 to form heterotrimeric protomers. Five protomers subsequently associate to form pentamers which serve as building blocks for the capsid. Interacts with capsid protein VP4 in the mature capsid. Interacts with protein 2C; this interaction may be important for virion morphogenesis. As to quaternary structure, interacts with capsid protein VP1 and capsid protein VP3. Homodimer. In terms of assembly, homohexamer; forms a hexameric ring structure with 6-fold symmetry characteristic of AAA+ ATPases. Interacts (via N-terminus) with host RTN3 (via reticulon domain); this interaction is important for viral replication. Interacts with capsid protein VP3; this interaction may be important for virion morphogenesis. As to quaternary structure, interacts with protein 3CD. Homodimer. Interacts with host GBF1. Interacts (via GOLD domain) with host ACBD3 (via GOLD domain); this interaction allows the formation of a viral protein 3A/ACBD3 heterotetramer with a 2:2 stoichiometry, which will stimulate the recruitment of host PI4KB in order to synthesize PI4P at the viral RNA replication sites. In terms of assembly, interacts with RNA-directed RNA polymerase. As to quaternary structure, interacts with protein 3AB and with RNA-directed RNA polymerase. Interacts with Viral protein genome-linked and with protein 3CD. The cofactor is Mg(2+). In terms of processing, specific enzymatic cleavages in vivo by the viral proteases yield processing intermediates and the mature proteins. Post-translationally, myristoylation is required for the formation of pentamers during virus assembly. Further assembly of 12 pentamers and a molecule of genomic RNA generates the provirion. During virion maturation, immature virions are rendered infectious following cleavage of VP0 into VP4 and VP2. This maturation seems to be an autocatalytic event triggered by the presence of RNA in the capsid and it is followed by a conformational change infectious virion. In terms of processing, myristoylation is required during RNA encapsidation and formation of the mature virus particle. Post-translationally, VPg is uridylylated by the polymerase into VPg-pUpU. This acts as a nucleotide-peptide primer for the genomic RNA replication.

It is found in the virion. The protein localises to the host cytoplasm. Its subcellular location is the host cytoplasmic vesicle membrane. The protein resides in the host nucleus. It catalyses the reaction a ribonucleoside 5'-triphosphate + H2O = a ribonucleoside 5'-diphosphate + phosphate + H(+). The enzyme catalyses Selective cleavage of Tyr-|-Gly bond in the picornavirus polyprotein.. It carries out the reaction RNA(n) + a ribonucleoside 5'-triphosphate = RNA(n+1) + diphosphate. The catalysed reaction is Selective cleavage of Gln-|-Gly bond in the poliovirus polyprotein. In other picornavirus reactions Glu may be substituted for Gln, and Ser or Thr for Gly.. Its activity is regulated as follows. Replication or transcription is subject to high level of random mutations by the nucleotide analog ribavirin. Forms an icosahedral capsid of pseudo T=3 symmetry with capsid proteins VP2 and VP3. The capsid is 300 Angstroms in diameter, composed of 60 copies of each capsid protein and enclosing the viral positive strand RNA genome. Capsid protein VP1 mainly forms the vertices of the capsid. Capsid protein VP1 interacts with host cell receptor to provide virion attachment to target host cells. This attachment induces virion internalization. Tyrosine kinases are probably involved in the entry process. After binding to its receptor, the capsid undergoes conformational changes. Capsid protein VP1 N-terminus (that contains an amphipathic alpha-helix) and capsid protein VP4 are externalized. Together, they shape a pore in the host membrane through which viral genome is translocated to host cell cytoplasm. Functionally, forms an icosahedral capsid of pseudo T=3 symmetry with capsid proteins VP2 and VP3. The capsid is 300 Angstroms in diameter, composed of 60 copies of each capsid protein and enclosing the viral positive strand RNA genome. Its function is as follows. Lies on the inner surface of the capsid shell. After binding to the host receptor, the capsid undergoes conformational changes. Capsid protein VP4 is released, Capsid protein VP1 N-terminus is externalized, and together, they shape a pore in the host membrane through which the viral genome is translocated into the host cell cytoplasm. In terms of biological role, component of immature procapsids, which is cleaved into capsid proteins VP4 and VP2 after maturation. Allows the capsid to remain inactive before the maturation step. Cysteine protease that cleaves viral polyprotein and specific host proteins. It is responsible for the autocatalytic cleavage between the P1 and P2 regions, which is the first cleavage occurring in the polyprotein. Also cleaves the host translation initiation factor EIF4G1, in order to shut down the capped cellular mRNA translation. Inhibits the host nucleus-cytoplasm protein and RNA trafficking by cleaving host members of the nuclear pores. Counteracts stress granule formation probably by antagonizing its assembly or promoting its dissassembly. Functionally, plays an essential role in the virus replication cycle by acting as a viroporin. Creates a pore in the host endoplasmic reticulum and as a consequence releases Ca2+ in the cytoplasm of infected cell. In turn, high levels of cytoplasmic calcium may trigger membrane trafficking and transport of viral ER-associated proteins to viroplasms, sites of viral genome replication. Its function is as follows. Induces and associates with structural rearrangements of intracellular membranes. Displays RNA-binding, nucleotide binding and NTPase activities. May play a role in virion morphogenesis and viral RNA encapsidation by interacting with the capsid protein VP3. In terms of biological role, localizes the viral replication complex to the surface of membranous vesicles. Together with protein 3CD binds the Cis-Active RNA Element (CRE) which is involved in RNA synthesis initiation. Acts as a cofactor to stimulate the activity of 3D polymerase, maybe through a nucleid acid chaperone activity. Localizes the viral replication complex to the surface of membranous vesicles. It inhibits host cell endoplasmic reticulum-to-Golgi apparatus transport and causes the disassembly of the Golgi complex, possibly through GBF1 interaction. This would result in depletion of MHC, trail receptors and IFN receptors at the host cell surface. Plays an essential role in viral RNA replication by recruiting ACBD3 and PI4KB at the viral replication sites, thereby allowing the formation of the rearranged membranous structures where viral replication takes place. Functionally, acts as a primer for viral RNA replication and remains covalently bound to viral genomic RNA. VPg is uridylylated prior to priming replication into VPg-pUpU. The oriI viral genomic sequence may act as a template for this. The VPg-pUpU is then used as primer on the genomic RNA poly(A) by the RNA-dependent RNA polymerase to replicate the viral genome. During genome replication, the VPg-RNA linkage is removed by the host TDP2, thereby accelerating replication. During the late stage of the replication cycle, host TDP2 is excluded from sites of viral RNA synthesis and encapsidation, allowing for the generation of progeny virions. Its function is as follows. Involved in the viral replication complex and viral polypeptide maturation. It exhibits protease activity with a specificity and catalytic efficiency that is different from protease 3C. Protein 3CD lacks polymerase activity. Protein 3CD binds to the 5'UTR of the viral genome. In terms of biological role, replicates the viral genomic RNA on the surface of intracellular membranes. May form linear arrays of subunits that propagate along a strong head-to-tail interaction called interface-I. Covalently attaches UMP to a tyrosine of VPg, which is used to prime RNA synthesis. The positive stranded RNA genome is first replicated at virus induced membranous vesicles, creating a dsRNA genomic replication form. This dsRNA is then used as template to synthesize positive stranded RNA genomes. ss(+)RNA genomes are either translated, replicated or encapsidated. Major viral protease that mediates proteolytic processing of the polyprotein. Cleaves host EIF5B, contributing to host translation shutoff. Also cleaves host PABPC1, contributing to host translation shutoff. Cleaves host NLRP1, triggers host N-glycine-mediated degradation of the autoinhibitory NLRP1 N-terminal fragment. The chain is Genome polyprotein from Homo sapiens (Human).